Consider the following 494-residue polypeptide: Folate-biopterin transporter (494 aa).

A run of 12 helical transmembrane segments spans residues Ala-31 to Leu-51, Leu-64 to Leu-84, Ser-104 to Val-124, Val-133 to Val-153, Leu-170 to Leu-190, Thr-197 to Ser-217, Ile-246 to Phe-266, Val-284 to Leu-303, Val-310 to Ile-330, Leu-346 to Leu-366, Ile-375 to Phe-395, and Leu-415 to Leu-435. Positions Pro-441–Val-461 are disordered.

The protein belongs to the major facilitator superfamily. Folate-biopterin transporter (TC 2.A.71) family.

Its subcellular location is the cell membrane. Functionally, mediates folate monoglutamate transport involved in tetrahydrofolate biosynthesis. It also mediates transport of antifolates, such as methotrexate and aminopterin. This is Folate-biopterin transporter from Synechocystis sp. (strain ATCC 27184 / PCC 6803 / Kazusa).